The sequence spans 313 residues: Tyrosine recombinase XerD (313 aa).

One can recognise a Core-binding (CB) domain in the interval 17–102 (EDNDVIIEQF…TLRRFFQYLY (86 aa)). The Tyr recombinase domain occupies 123–307 (RLPKDLSEQQ…ATERLKVLHQ (185 aa)). Residues Arg-163, Lys-187, His-259, Arg-262, and His-285 contribute to the active site. The O-(3'-phospho-DNA)-tyrosine intermediate role is filled by Tyr-294.

The protein belongs to the 'phage' integrase family. XerD subfamily. As to quaternary structure, forms a cyclic heterotetrameric complex composed of two molecules of XerC and two molecules of XerD, in which XerC interacts with XerD via its C-terminal region, XerD interacts with XerC via its C-terminal region and so on.

It is found in the cytoplasm. With respect to regulation, ftsK may regulate the catalytic switch between XerC and XerD in the heterotetrameric complex during the two steps of the recombination process. Its function is as follows. Site-specific tyrosine recombinase, which acts by catalyzing the cutting and rejoining of the recombining DNA molecules. Binds cooperatively to specific DNA consensus sequences that are separated from XerC binding sites by a short central region, forming the heterotetrameric XerC-XerD complex that recombines DNA substrates. The complex is essential to convert dimers of the bacterial chromosome into monomers to permit their segregation at cell division. It also contributes to the segregational stability of plasmids. In the complex XerD specifically exchanges the bottom DNA strands. The chain is Tyrosine recombinase XerD from Proteus mirabilis.